Reading from the N-terminus, the 392-residue chain is Dual-specificity RNA methyltransferase RlmN (392 aa).

Glu116 functions as the Proton acceptor in the catalytic mechanism. Residues 122-364 enclose the Radical SAM core domain; it reads EEGRGTLCVS…SPIRTPRGED (243 aa). Residues Cys129 and Cys369 are joined by a disulfide bond. Residues Cys136, Cys140, and Cys143 each contribute to the [4Fe-4S] cluster site. S-adenosyl-L-methionine-binding positions include 195-196, Ser227, 249-251, and Asn326; these read GE and SFH. Cys369 serves as the catalytic S-methylcysteine intermediate.

It belongs to the radical SAM superfamily. RlmN family. [4Fe-4S] cluster serves as cofactor.

The protein localises to the cytoplasm. The catalysed reaction is adenosine(2503) in 23S rRNA + 2 reduced [2Fe-2S]-[ferredoxin] + 2 S-adenosyl-L-methionine = 2-methyladenosine(2503) in 23S rRNA + 5'-deoxyadenosine + L-methionine + 2 oxidized [2Fe-2S]-[ferredoxin] + S-adenosyl-L-homocysteine. It catalyses the reaction adenosine(37) in tRNA + 2 reduced [2Fe-2S]-[ferredoxin] + 2 S-adenosyl-L-methionine = 2-methyladenosine(37) in tRNA + 5'-deoxyadenosine + L-methionine + 2 oxidized [2Fe-2S]-[ferredoxin] + S-adenosyl-L-homocysteine. In terms of biological role, specifically methylates position 2 of adenine 2503 in 23S rRNA and position 2 of adenine 37 in tRNAs. m2A2503 modification seems to play a crucial role in the proofreading step occurring at the peptidyl transferase center and thus would serve to optimize ribosomal fidelity. The polypeptide is Dual-specificity RNA methyltransferase RlmN (Cereibacter sphaeroides (strain ATCC 17029 / ATH 2.4.9) (Rhodobacter sphaeroides)).